Here is a 208-residue protein sequence, read N- to C-terminus: MATSAVPSDNLPTYKLVVVGDGGVGKSALTIQFFQKIFVPDYDPTIEDSYLKHTEIDNQWAILDVLDTAGQEEFSAMREQYMRTGDGFLIVYSVTDKASFEHVDRFHQLILRVKDRESFPMILVANKVDLMHLRKITREQGKEMATKHNIPYIETSAKDPPLNVDKAFHDLVRVIRQQIPEKSQKKKKKTKWRGDRATGTHKLQCVIL.

D21, G22, G23, V24, G25, K26, S27, A28, F38, V39, P40, Y42, P44, and T45 together coordinate GTP. Position 27 (S27) interacts with Mg(2+). The short motif at 42–50 (YDPTIEDSY) is the Effector region element. Residues T45 and D67 each contribute to the Mg(2+) site. GTP is bound by residues G70, N126, K127, D129, S156, A157, and K158. C205 is subject to Cysteine methyl ester. C205 carries the S-geranylgeranyl cysteine lipid modification. The propeptide at 206–208 (VIL) is removed in mature form.

Belongs to the small GTPase superfamily. Ras family. As to quaternary structure, component of the SHOC2-MRAS-PP1c (SMP) holophosphatase complex consisting of SHOC2, GTP-bound M-Ras/MRAS and the catalytic subunit of protein phosphatase 1 (either PPP1CA, PPP1CB or PPP1CC). Interacts (active GTP-bound form) with both SHOC2 and PP1c (all isoforms) to form a tertiary complex; SHOC2 and PP1c preferably bind M-Ras/MRAS, but they also bind K-Ras/KRAS, N-Ras/NRAS and H-Ras/HRAS. Interacts with RGL3. Interacts (active GTP-bound form preferentially) with RGS14. Mg(2+) serves as cofactor. Expression highly restricted to the brain and heart.

The protein resides in the cell membrane. The catalysed reaction is GTP + H2O = GDP + phosphate + H(+). Its function is as follows. Signal transducer in the Ras-MAPK signaling pathway that regulates cell proliferation and survival. Core component of the SHOC2-MRAS-PP1c (SMP) holophosphatase complex that regulates the MAPK pathway activation. The formation of the SMP complex only occurs when MRAS is GTP-bound. MRAS has low intrinsic GTPase activity and may require additional factors for activation. The SMP complex specifically dephosphorylates the inhibitory phosphorylation at 'Ser-259' of RAF1 kinase, 'Ser-365' of BRAF kinase and 'Ser-214' of ARAF kinase, stimulating their kinase activities. The protein is Ras-related protein M-Ras (MRAS) of Homo sapiens (Human).